The chain runs to 237 residues: Ribitol-5-phosphate cytidylyltransferase (237 aa).

Residues 7–10, 81–87, and S112 each bind CTP; these read LAGG and GSDRNES.

Belongs to the IspD/TarI cytidylyltransferase family. TarI subfamily.

The catalysed reaction is D-ribitol 5-phosphate + CTP + H(+) = CDP-L-ribitol + diphosphate. Its pathway is cell wall biogenesis; poly(ribitol phosphate) teichoic acid biosynthesis. Functionally, catalyzes the transfer of the cytidylyl group of CTP to D-ribitol 5-phosphate. The sequence is that of Ribitol-5-phosphate cytidylyltransferase from Bacillus spizizenii (strain ATCC 23059 / NRRL B-14472 / W23) (Bacillus subtilis subsp. spizizenii).